We begin with the raw amino-acid sequence, 459 residues long: UDP-glycosyltransferase 79B30 (459 aa).

Catalysis depends on H18, which acts as the Proton acceptor. Residue H18 coordinates an anthocyanidin. D115 (charge relay) is an active-site residue. UDP-alpha-D-glucose-binding residues include T136, V333, Q335, H350, S355, and E358. G373 contacts an anthocyanidin. UDP-alpha-D-glucose is bound by residues D374 and Q375.

The protein belongs to the UDP-glycosyltransferase family. As to expression, expressed in leaves.

The enzyme catalyses a flavonol 3-O-beta-D-glucoside + UDP-alpha-D-glucose = a flavonol 3-O-beta-D-glucosyl-(1-&gt;2)-beta-D-glucoside + UDP + H(+). Flavonol 3-O-glucoside/galactoside (1-&gt;2) glucosyltransferase converting kaempferol 3-O-glucoside to kaempferol 3-O-sophoroside. Has a broad in vitro activity for kaempferol/ quercetin 3-O-glucoside/galactoside derivatives, but cannot glucosylate kaempferol 3-O-rhamnosyl-(1-&gt;4)-[rhamnosyl-(1-&gt;6)- glucoside] and 3-O-rhamnosyl-(1-&gt;4)-[glucosyl-(1-&gt;6)-glucoside]. Has a higher preference for UDP-glucose than UDP-galactose, and no activity with UDP-arabinose and UDP-glucuronic acid. Represents probably a recessive allele of the gene. This is UDP-glycosyltransferase 79B30 from Glycine max (Soybean).